Here is an 828-residue protein sequence, read N- to C-terminus: Protein SEY1 homolog (828 aa).

Residues 1 to 718 lie on the Cytoplasmic side of the membrane; sequence MTEDVMNDDF…SSKNGISWKN (718 aa). Residues 44 to 284 enclose the GB1/RHD3-type G domain; the sequence is GFNYNVLSIL…VPSDGFFYYA (241 aa). 54-61 serves as a coordination point for GTP; it reads GCQSSGKS. A helical transmembrane segment spans residues 719–739; that stretch reads IPPPFWILLLLCSWNELCSVL. Over 740–742 the chain is Lumenal; it reads RIV. Residues 743-763 traverse the membrane as a helical segment; sequence FKVQVLIPLIILGFIVVQYFS. The Cytoplasmic segment spans residues 764 to 828; the sequence is HLVFGTSADA…NDSGKKAEEN (65 aa).

This sequence belongs to the TRAFAC class dynamin-like GTPase superfamily. GB1/RHD3 GTPase family. RHD3 subfamily.

It is found in the endoplasmic reticulum membrane. In terms of biological role, probable GTP-binding protein that may be involved in cell development. The polypeptide is Protein SEY1 homolog (Babesia bovis).